The sequence spans 85 residues: Small ribosomal subunit protein bS20 (85 aa).

It belongs to the bacterial ribosomal protein bS20 family.

Binds directly to 16S ribosomal RNA. This Borreliella afzelii (strain PKo) (Borrelia afzelii) protein is Small ribosomal subunit protein bS20.